The chain runs to 294 residues: Histone deacetylase HDT3 (294 aa).

Methionine 1 is modified (N-acetylmethionine). Positions 2–5 (EFWG) are required to repress transcription. The tract at residues 124 to 269 (QVNFQLPNED…TPKSAGAFGC (146 aa)) is disordered. Positions 140-188 (DDADGSEEDSSDDDDSENSGDEEEEKVTAESDSEEDDSSDDEEDDSSEE) are enriched in acidic residues. Residues 189 to 202 (ETPKKPEEPKKRSA) are compositionally biased toward basic and acidic residues. Over residues 203–213 (EPNSSKNPASN) the composition is skewed to low complexity. Over residues 252-262 (GETSKQQQTPK) the composition is skewed to polar residues. The C2H2-type zinc finger occupies 267-290 (FGCKSCTRTFTSEMGLQSHTKAKH).

Belongs to the histone deacetylase HD2 family. As to quaternary structure, interacts with DNMT2. In terms of tissue distribution, expressed in leaves, roots, stems, young plantlets, flowers and siliques. Highest levels in ovules, embryos, shoot apical meristems and first leaves. Also expressed in somatic embryos.

The protein localises to the nucleus. It is found in the nucleolus. In terms of biological role, probably mediates the deacetylation of lysine residues on the N-terminal part of the core histones (H2A, H2B, H3 and H4). Histone deacetylation gives a tag for epigenetic repression and plays an important role in transcriptional regulation, cell cycle progression and developmental events. Involved in the modulation of abscisic acid and stress-responsive genes. This chain is Histone deacetylase HDT3 (HDT3), found in Arabidopsis thaliana (Mouse-ear cress).